Here is a 254-residue protein sequence, read N- to C-terminus: Small ribosomal subunit protein uS2 (254 aa).

It belongs to the universal ribosomal protein uS2 family.

This Legionella pneumophila (strain Corby) protein is Small ribosomal subunit protein uS2.